Reading from the N-terminus, the 498-residue chain is Galactose-1-phosphate uridylyltransferase (498 aa).

It belongs to the galactose-1-phosphate uridylyltransferase type 2 family.

The protein localises to the cytoplasm. It carries out the reaction alpha-D-galactose 1-phosphate + UDP-alpha-D-glucose = alpha-D-glucose 1-phosphate + UDP-alpha-D-galactose. Its pathway is carbohydrate metabolism; galactose metabolism. The polypeptide is Galactose-1-phosphate uridylyltransferase (Staphylococcus carnosus (strain TM300)).